The chain runs to 216 residues: Glycerol-3-phosphate acyltransferase (216 aa).

Helical transmembrane passes span 4 to 24 (TIIG…LWIG), 71 to 91 (LPFF…LAVI), 113 to 133 (VVLG…ASIL), 144 to 164 (VLSA…GFIL), and 165 to 185 (PSYD…IILR).

This sequence belongs to the PlsY family. As to quaternary structure, probably interacts with PlsX.

The protein resides in the cell membrane. It catalyses the reaction an acyl phosphate + sn-glycerol 3-phosphate = a 1-acyl-sn-glycero-3-phosphate + phosphate. Its pathway is lipid metabolism; phospholipid metabolism. Its function is as follows. Catalyzes the transfer of an acyl group from acyl-phosphate (acyl-PO(4)) to glycerol-3-phosphate (G3P) to form lysophosphatidic acid (LPA). This enzyme utilizes acyl-phosphate as fatty acyl donor, but not acyl-CoA or acyl-ACP. This is Glycerol-3-phosphate acyltransferase from Streptococcus sanguinis (strain SK36).